Consider the following 215-residue polypeptide: MIRASKVHGQYHWKEPAADTVVLDFDDRHRRRMAMTGTRGLSFLLDLEHATALRGGDALVLDDGRLIEVVAAPEPLLEIRGRDPQHLVRLAWHLGNRHLPTQIMAKALRIRRDHVIADMVRGLGGKAVEIEAPFDPEGGAYAPAHEGAAHHDHGGHEHRHHDHGHHDHADHEHDHKHDHGKHDHAGHDHAHDHHVHDEHCGHDHGHGHSHKHDHK.

The tract at residues 134–215 (FDPEGGAYAP…HGHSHKHDHK (82 aa)) is disordered. Basic and acidic residues predominate over residues 164–206 (GHHDHADHEHDHKHDHGKHDHAGHDHAHDHHVHDEHCGHDHGH).

It belongs to the UreE family.

The protein localises to the cytoplasm. In terms of biological role, involved in urease metallocenter assembly. Binds nickel. Probably functions as a nickel donor during metallocenter assembly. The chain is Urease accessory protein UreE from Rhodopseudomonas palustris (strain HaA2).